A 573-amino-acid polypeptide reads, in one-letter code: Glutathione/L-cysteine transport system ATP-binding/permease protein CydC (573 aa).

Residues Met-1–Lys-15 lie on the Cytoplasmic side of the membrane. Transmembrane regions (helical) follow at residues Trp-16 to Leu-36 and Thr-37 to Phe-57. Residues Leu-20–Gln-306 form the ABC transmembrane type-1 domain. Residues Asn-58–Arg-136 lie on the Cytoplasmic side of the membrane. Residues Val-137–Phe-157 form a helical membrane-spanning segment. The Periplasmic portion of the chain corresponds to Leu-158–Thr-161. The helical transmembrane segment at Leu-162–Tyr-182 threads the bilayer. Over Arg-183–Ala-249 the chain is Cytoplasmic. The chain crosses the membrane as a helical span at residues Ile-250–Val-270. Over Gly-271–Pro-276 the chain is Periplasmic. A helical transmembrane segment spans residues Gly-277–Val-297. Residues Thr-298 to Leu-573 lie on the Cytoplasmic side of the membrane. An ABC transporter domain is found at Leu-339 to Gly-572. Gly-373–Ser-380 lines the ATP pocket.

The protein belongs to the ABC transporter superfamily. Cysteine exporter (TC 3.A.1.129.1) family. In terms of assembly, forms a heterodimer with CydD.

It is found in the cell inner membrane. The catalysed reaction is L-cysteine(in) + ATP + H2O = L-cysteine(out) + ADP + phosphate + H(+). The enzyme catalyses glutathione(in) + ATP + H2O = glutathione(out) + ADP + phosphate + H(+). Its activity is regulated as follows. ATPase activity is stimulated by various thiol compounds. The presence of heme leads to a further enhancement of thiol-stimulated ATPase activity, although a large excess of heme inhibits activity. Glutathione transport is inhibited by sodium orthovanadate, an inhibitor of ABC-type transport systems, but not by the proton ionophore carbonyl cyanide m-chlorophenylhydrazone (CCCP). In terms of biological role, part of the ABC transporter complex CydDC that exports the reduced low-molecular-weight thiols cysteine and glutathione to the periplasm. Export of these thiol-containing redox-active molecules may be crucial for redox homeostasis in the periplasm, permitting correct assembly of various respiratory complexes and formation of correct disulfide bonds in periplasmic and secreted proteins. CydC contains transmembrane domains (TMD), which form a pore in the inner membrane, and an ATP-binding domain (NBD), which is responsible for energy generation. Required for the assembly of functional cytochrome bd-type quinol oxidases and periplasmic c-type cytochromes. Overexpression of CydDC under anaerobic conditions also results in the formation of a heme biosynthesis-derived pigment, P-574. CydDC binds heme b, but heme is probably not transported by the complex and instead has a role in regulating ATPase activity. Conversely, a more recent study suggests an alternative function of CydDC: authors suggest that CydDC does not mediate the export of L-cysteine but rather reduces cytoplasmic L-cystine to L-cysteine. The principle function of CydDC would be to maintain the reduced state of cytoplasmic L-cysteine, thereby providing an important connection between sulfur metabolism, oxidative stress and resistance to antibiotics. The chain is Glutathione/L-cysteine transport system ATP-binding/permease protein CydC from Escherichia coli (strain K12).